A 64-amino-acid polypeptide reads, in one-letter code: MDDKVETGNIDVRLLELLVCPLTKGPLEYDAERSELVSRKARLAYPVRGGIPIMLPSEARSLTE.

This sequence belongs to the UPF0434 family.

The sequence is that of UPF0434 protein BAB2_0345 from Brucella abortus (strain 2308).